The primary structure comprises 450 residues: Immunoglobulin G-binding protein A (450 aa).

Residues 1–36 (MKKKNIYSIRKLGVGIASVTLGTLLISGGVTPAANA) form the signal peptide. The short motif at 7–18 (YSIRKLGVGIAS) is the YSIRK-G/S signaling motif element. The stretch at 37–92 (AQHDEAQQNAFYQVLNMPNLNADQRNGFIQSLKDDPSQSANVLGEAQKLNDSQAPK) is one Immunoglobulin-binding region E repeat. The stretch at 93–153 (ADAQQNNFNK…KKLNESQAPK (61 aa)) is one Immunoglobulin-binding region D repeat. The stretch at 154–211 (ADNNFNKEQQNAFYEILNMPNLNEEQRNGFIQSLKDDPSQSANLLSEAKKLNESQAPK) is one Immunoglobulin-binding region A repeat. One copy of the Immunoglobulin-binding region B/C repeat lies at 212 to 269 (ADNKFNKEQQNAFYEILHLPNLNEEQRNGFIQSLKDDPSVSKEILAEAKKLNDAQAPK). Basic and acidic residues predominate over residues 260-354 (KKLNDAQAPK…GNKPGKEDGN (95 aa)). 2 disordered regions span residues 260-365 (KKLN…GDTV) and 401-421 (KKQP…ETGE). 11 tandem repeats follow at residues 268 to 275 (PKEEDNKK), 276 to 283 (PGKEDGNK), 284 to 291 (PGKEDGNK), 292 to 299 (PGKEDNKK), 300 to 307 (PGKEDGNK), 308 to 315 (PGKEDNNK), 316 to 323 (PGKEDGNK), 324 to 331 (PGKEDNNK), 332 to 339 (PGKEDGNK), 340 to 347 (PGKEDGNK), and 348 to 355 (PGKEDGNG). Residues 268–355 (PKEEDNKKPG…NKPGKEDGNG (88 aa)) form a 12 X 8 AA approximate tandem repeats region. Residues 355 to 399 (GVHVVKPGDTVNDIAKANGTTADKIAADNKLADKNMIKPGQELVV) enclose the LysM domain. The LPXTG sorting signal motif lies at 416–420 (LPETG). Pentaglycyl murein peptidoglycan amidated threonine is present on Thr419. Positions 420-450 (GEENPFIGTTVFGGLSLALGAALLAGRRREL) are cleaved as a propeptide — removed by sortase.

The protein belongs to the immunoglobulin-binding protein SpA family. Interacts with host TNFRSF1A; this interaction leads to the stimulation of both surface expression and shedding of TNFRSF1A.

It is found in the secreted. It localises to the cell wall. Plays a role in the inhibition of the host innate and adaptive immune responses. Possesses five immunoglobulin-binding domains that capture both the fragment crystallizable region (Fc region) and the Fab region (part of Ig that identifies antigen) of immunoglobulins. In turn, Staphylococcus aureus is protected from phagocytic killing via inhibition of Ig Fc region. In addition, the host elicited B-cell response is prevented due to a decrease of antibody-secreting cell proliferation that enter the bone marrow, thereby decreasing long-term antibody production. Inhibits osteogenesis by preventing osteoblast proliferation and expression of alkaline phosphatase, type I collagen, osteopontin and osteocalcin. Acts directly as a pro-inflammatory factor in the lung through its ability to bind and activate tumor necrosis factor alpha receptor 1/TNFRSF1A. The polypeptide is Immunoglobulin G-binding protein A (spa) (Staphylococcus aureus (strain Mu50 / ATCC 700699)).